Consider the following 155-residue polypeptide: V-type proton ATPase 16 kDa proteolipid subunit c (155 aa).

The Lumenal portion of the chain corresponds to 1 to 10 (MSEAKSGPEY). The helical transmembrane segment at 11–33 (ASFFAVMGASAAMVFSALGAAYG) threads the bilayer. The Cytoplasmic segment spans residues 34-55 (TAKSGTGIAAMSVMRPEMIMKS). A helical membrane pass occupies residues 56–76 (IIPVVMAGIIAIYGLVVAVLI). Residues 77 to 92 (ANSLNDGISLYRSFLQ) lie on the Lumenal side of the membrane. The helical transmembrane segment at 93–114 (LGAGLSVGLSGLAAGFAIGIVG) threads the bilayer. Residues 115–131 (DAGVRGTAQQPRLFVGM) lie on the Cytoplasmic side of the membrane. A helical membrane pass occupies residues 132–152 (ILILIFAEVLGLYGLIVALIL). Topologically, residues 153–155 (STK) are lumenal.

The protein belongs to the V-ATPase proteolipid subunit family. As to quaternary structure, V-ATPase is a heteromultimeric enzyme made up of two complexes: the ATP-hydrolytic V1 complex and the proton translocation V0 complex. The V1 complex consists of three catalytic AB heterodimers that form a heterohexamer, three peripheral stalks each consisting of EG heterodimers, one central rotor including subunits D and F, and the regulatory subunits C and H. The proton translocation complex V0 consists of the proton transport subunit a, a ring of proteolipid subunits c9c'', rotary subunit d, subunits e and f, and the accessory subunits ATP6AP1/Ac45 and ATP6AP2/PRR. Interacts with the V0 complex V-ATPase subunit a4 ATP6V0A4. Interacts with LASS2. Interacts with RNF182; this interaction leads to ubiquitination and degradation via the proteasome pathway. In terms of processing, ubiquitinated by RNF182, leading to its degradation via the ubiquitin-proteasome pathway.

Its subcellular location is the cytoplasmic vesicle. The protein resides in the clathrin-coated vesicle membrane. The protein localises to the secretory vesicle. It localises to the synaptic vesicle membrane. Its function is as follows. Proton-conducting pore forming subunit of the V0 complex of vacuolar(H+)-ATPase (V-ATPase), a multisubunit enzyme composed of a peripheral complex (V1) that hydrolyzes ATP and a membrane integral complex (V0) that translocates protons. V-ATPase is responsible for acidifying and maintaining the pH of intracellular compartments and in some cell types, is targeted to the plasma membrane, where it is responsible for acidifying the extracellular environment. In Ovis aries (Sheep), this protein is V-type proton ATPase 16 kDa proteolipid subunit c (ATP6V0C).